Reading from the N-terminus, the 125-residue chain is Ribosome-binding factor A (125 aa).

This sequence belongs to the RbfA family. In terms of assembly, monomer. Binds 30S ribosomal subunits, but not 50S ribosomal subunits or 70S ribosomes.

Its subcellular location is the cytoplasm. One of several proteins that assist in the late maturation steps of the functional core of the 30S ribosomal subunit. Associates with free 30S ribosomal subunits (but not with 30S subunits that are part of 70S ribosomes or polysomes). Required for efficient processing of 16S rRNA. May interact with the 5'-terminal helix region of 16S rRNA. In Methylobacillus flagellatus (strain ATCC 51484 / DSM 6875 / VKM B-1610 / KT), this protein is Ribosome-binding factor A.